The chain runs to 71 residues: Beta-defensin 25 (71 aa).

The N-terminal stretch at 1 to 22 (MAKWILLIVALLVLSHVPPGST) is a signal peptide. Disulfide bonds link C27–C54, C34–C48, and C38–C55.

Belongs to the beta-defensin family.

It is found in the secreted. Functionally, has antibacterial activity. The chain is Beta-defensin 25 (Defb25) from Mus musculus (Mouse).